Reading from the N-terminus, the 398-residue chain is Phosphoglycerate kinase (398 aa).

Residues 21–23, R36, 59–62, R119, and R157 each bind substrate; these read DFN and HLGR. ATP contacts are provided by residues K208, G296, E327, and 354 to 357; that span reads GGDS.

Belongs to the phosphoglycerate kinase family. In terms of assembly, monomer.

The protein resides in the cytoplasm. It carries out the reaction (2R)-3-phosphoglycerate + ATP = (2R)-3-phospho-glyceroyl phosphate + ADP. The protein operates within carbohydrate degradation; glycolysis; pyruvate from D-glyceraldehyde 3-phosphate: step 2/5. The chain is Phosphoglycerate kinase from Streptococcus sanguinis (strain SK36).